Reading from the N-terminus, the 258-residue chain is Phosphoribosylaminoimidazole-succinocarboxamide synthase (258 aa).

Belongs to the SAICAR synthetase family.

The enzyme catalyses 5-amino-1-(5-phospho-D-ribosyl)imidazole-4-carboxylate + L-aspartate + ATP = (2S)-2-[5-amino-1-(5-phospho-beta-D-ribosyl)imidazole-4-carboxamido]succinate + ADP + phosphate + 2 H(+). Its pathway is purine metabolism; IMP biosynthesis via de novo pathway; 5-amino-1-(5-phospho-D-ribosyl)imidazole-4-carboxamide from 5-amino-1-(5-phospho-D-ribosyl)imidazole-4-carboxylate: step 1/2. The sequence is that of Phosphoribosylaminoimidazole-succinocarboxamide synthase from Rhizorhabdus wittichii (strain DSM 6014 / CCUG 31198 / JCM 15750 / NBRC 105917 / EY 4224 / RW1) (Sphingomonas wittichii).